The sequence spans 778 residues: E3 UFM1-protein ligase 1 homolog (778 aa).

A disordered region spans residues 404–477 (NNLSTSHDAD…TVQQSAGNTR (74 aa)). Over residues 445–457 (KSTKKHQRGRAAA) the composition is skewed to basic residues.

The protein belongs to the UFL1 family.

Functionally, E3 UFM1-protein ligase that mediates ufmylation of target proteins. The chain is E3 UFM1-protein ligase 1 homolog from Drosophila virilis (Fruit fly).